A 58-amino-acid chain; its full sequence is Small ribosomal subunit protein bS21 (58 aa).

The disordered stretch occupies residues 39–58 (DKPSVKKRAKSKAAAKYRSR). Basic residues predominate over residues 43–58 (VKKRAKSKAAAKYRSR).

Belongs to the bacterial ribosomal protein bS21 family.

This is Small ribosomal subunit protein bS21 (rpsU) from Chlamydia pneumoniae (Chlamydophila pneumoniae).